The following is a 493-amino-acid chain: Proline--tRNA ligase (493 aa).

It belongs to the class-II aminoacyl-tRNA synthetase family. ProS type 3 subfamily. As to quaternary structure, homodimer.

It is found in the cytoplasm. It catalyses the reaction tRNA(Pro) + L-proline + ATP = L-prolyl-tRNA(Pro) + AMP + diphosphate. Its function is as follows. Catalyzes the attachment of proline to tRNA(Pro) in a two-step reaction: proline is first activated by ATP to form Pro-AMP and then transferred to the acceptor end of tRNA(Pro). This is Proline--tRNA ligase from Porphyromonas gingivalis (strain ATCC 33277 / DSM 20709 / CIP 103683 / JCM 12257 / NCTC 11834 / 2561).